The chain runs to 405 residues: MDHLPMPKFGPLAGLRVVFSGIEIAGPFAGQMFAEWGAEVIWIENVAWADTIRVQPNYPQLSRRNLHALSLNIFKDEGREAFLKLMETTDIFIEASKGPAFARRGITDEVLWQHNPKLVIAHLSGFGQYGTEEYTNLPAYNTIAQAFSGYLIQNGDVDQPMPAFPYTADYFSGLTATTAALAALHKVRETGKGESIDIAMYEVMLRMGQYFMMDYFNGGEMCPRMTKGKDPYYAGCGLYKCADGYIVMELVGITQITECFKDIGLAHLLGTPEIPEGTQLIHRIECPYGPLVEEKLDAWLAAHTIAEVKERFAELNIACAKVLTVPELESNPQYVARESITQWQTMDGRTCKGPNIMPKFKNNPGQIWRGMPSHGMDTAAILKNIGYSENDIQELVSKGLAKVED.

CoA-binding residues include Lys97 and Arg104. Asp169 (nucleophile) is an active-site residue.

The protein belongs to the CoA-transferase III family. CaiB subfamily. In terms of assembly, homodimer.

It localises to the cytoplasm. The catalysed reaction is crotonobetainyl-CoA + (R)-carnitine = crotonobetaine + (R)-carnitinyl-CoA. It carries out the reaction 4-(trimethylamino)butanoyl-CoA + (R)-carnitine = (R)-carnitinyl-CoA + 4-(trimethylamino)butanoate. Its pathway is amine and polyamine metabolism; carnitine metabolism. Its function is as follows. Catalyzes the reversible transfer of the CoA moiety from gamma-butyrobetainyl-CoA to L-carnitine to generate L-carnitinyl-CoA and gamma-butyrobetaine. Is also able to catalyze the reversible transfer of the CoA moiety from gamma-butyrobetainyl-CoA or L-carnitinyl-CoA to crotonobetaine to generate crotonobetainyl-CoA. The protein is L-carnitine CoA-transferase of Escherichia coli O6:K15:H31 (strain 536 / UPEC).